A 138-amino-acid chain; its full sequence is Flavodoxin (138 aa).

Residues 1-136 enclose the Flavodoxin-like domain; sequence MKIVYWSGTG…DCIEFGKKIA (136 aa).

This sequence belongs to the flavodoxin family. FMN is required as a cofactor.

Its function is as follows. Low-potential electron donor to a number of redox enzymes. This is Flavodoxin from Clostridium beijerinckii (Clostridium MP).